The primary structure comprises 517 residues: Carotenoid phi-ring synthase (517 aa).

The disordered stretch occupies residues 1–24; sequence MFARDSGRGHRHGRDRQAAVVPAP. FAD contacts are provided by residues alanine 45, 64-65, arginine 72, tyrosine 99, aspartate 461, and methionine 472; that span reads ER.

The protein belongs to the carotenoid/retinoid oxidoreductase family. FAD serves as cofactor.

It catalyses the reaction a carotenoid beta-end derivative + 2 A = a carotenoid phi-end derivative + 2 AH2. It participates in carotenoid biosynthesis. Functionally, involved in the biosynthesis of isorenieratene, a carotenoid with aromatic end groups. Catalyzes the introduction of two additional double bonds into each ionone ring of beta-carotene to produce isorenieratene. The reaction includes an intramolecular methyl transfer from position C1 to position C2 of the ring. This Streptomyces griseus protein is Carotenoid phi-ring synthase.